A 475-amino-acid polypeptide reads, in one-letter code: Transcription factor EB (475 aa).

The segment at 1 to 52 is disordered; that stretch reads MASRIGLRMQLMREQAQQEEQRERMQQQAVMHYMQQQQQQQQQLGGPPTPAI. The tract at residues 1-166 is interaction with ACSS2; the sequence is MASRIGLRMQ…DDVIDNIMRL (166 aa). A compositionally biased stretch (low complexity) spans 26–43; the sequence is QQQAVMHYMQQQQQQQQQ. S108, S113, S121, and S137 each carry phosphoserine. The short motif at 135–152 is the Nuclear export signal element; the sequence is GNSAPNSPMAMLHISSNP. S141 bears the Phosphoserine; by MTOR mark. Positions 155–164 are strong transcription activation domain; that stretch reads EFDDVIDNIM. Residue T182 is modified to Phosphothreonine. S210 bears the Phosphoserine; by MTOR mark. S-(2,3-dicarboxypropyl)cysteine is present on C211. The region spanning 234 to 287 is the bHLH domain; the sequence is QKKDNHNLIERRRRFNINDRIKELGMLIPKANDLDVRWNKGTILKASVDYIRRM. The Nuclear localization signal motif lies at 244 to 247; the sequence is RRRR. Residues 297–318 form a leucine-zipper region; sequence LENHSRRLEMTNKQLWLRIQEL. S331 carries the post-translational modification Phosphoserine. Residues 351-429 are disordered; that stretch reads SEDGPGEALM…HGSPFPNLSK (79 aa). Positions 380–389 are enriched in low complexity; the sequence is LPSAAQPQSP. Phosphoserine is present on residues S422, S440, S465, S466, and S468. Low complexity predominate over residues 445-468; that stretch reads ASDPLFSTMSPEASKASSRRSSFS. The segment at 445–475 is disordered; the sequence is ASDPLFSTMSPEASKASSRRSSFSMEEGDVL.

It belongs to the MiT/TFE family. As to quaternary structure, homodimer and heterodimer; with TFE3 or MITF. Interacts (when phosphorylated by MTOR) with YWHAZ; promoting retention in the cytosol. Interacts with Irgm1; promoting association between TFEB and PPP3CB and dephosphorylation. Interacts with small GTPases Rag (RagA/RRAGA, RagB/RRAGB, RagC/RRAGC and/or RagD/RRAGD); promoting its recruitment to lysosomal membrane in the presence of nutrients. Interacts with ACSS2. In terms of processing, phosphorylation at Ser-210 by MTOR via non-canonical mTORC1 pathway regulates its subcellular location and activity. When nutrients are present, phosphorylation by MTOR promotes association with 14-3-3/YWHA adapters and retention in the cytosol. Inhibition of mTORC1, starvation and lysosomal disruption, promotes dephosphorylation by calcineurin PPP3CB and translocation to the nucleus. Dephosphorylated by calcineurin PPP3CB in response to lysosomal Ca(2+) release. Irgm1 promotes dephosphorylation by calcineurin PPP3CB, resulting in TFEB nuclear translocation and stimulation of lysosomal biogenesis. Exported from the nucleus in a mTORC1-dependent manner in response to nutrient availability. Post-translationally, alkylated via a non-enzymatic covalent modification. Itaconate, an anti-inflammatory metabolite generated in response to lipopolysaccharide, alkylates Cys-211, preventing association with 14-3-3/YWHA adapters, thereby promoting nuclear translocation and activity. Sumoylated; does not affect dimerization with MITF. As to expression, widely expressed.

It localises to the nucleus. Its subcellular location is the cytoplasm. It is found in the cytosol. The protein localises to the lysosome membrane. Its function is as follows. Transcription factor that acts as a master regulator of lysosomal biogenesis, autophagy, lysosomal exocytosis, lipid catabolism, energy metabolism and immune response. Specifically recognizes and binds E-box sequences (5'-CANNTG-3'); efficient DNA-binding requires dimerization with itself or with another MiT/TFE family member such as TFE3 or MITF. Involved in the cellular response to amino acid availability by acting downstream of MTOR: in the presence of nutrients, TFEB phosphorylation by MTOR promotes its cytosolic retention and subsequent inactivation. Upon starvation or lysosomal stress, inhibition of MTOR induces TFEB dephosphorylation, resulting in nuclear localization and transcription factor activity. Specifically recognizes and binds the CLEAR-box sequence (5'-GTCACGTGAC-3') present in the regulatory region of many lysosomal genes, leading to activate their expression, thereby playing a central role in expression of lysosomal genes. Regulates lysosomal positioning in response to nutrient deprivation by promoting the expression of PIP4P1. Acts as a positive regulator of autophagy by promoting expression of genes involved in autophagy. In association with TFE3, activates the expression of CD40L in T-cells, thereby playing a role in T-cell-dependent antibody responses in activated CD4(+) T-cells and thymus-dependent humoral immunity. Specifically recognizes the gamma-E3 box, a subset of E-boxes, present in the heavy-chain immunoglobulin enhancer. Plays a role in the signal transduction processes required for normal vascularization of the placenta. Involved in the immune response to infection by the bacteria S.aureus, S.typhimurium or S.enterica. Infection promotes itaconate production, leading to alkylation, resulting in nuclear localization and transcription factor activity. Itaconate-mediated alkylation activates TFEB-dependent lysosomal biogenesis, facilitating the bacteria clearance during the antibacterial innate immune response. In association with ACSS2, promotes the expression of genes involved in lysosome biogenesis and both autophagy upon glucose deprivation. The chain is Transcription factor EB from Mus musculus (Mouse).